The sequence spans 127 residues: Small ribosomal subunit protein bS6 (127 aa).

Residues 104–127 (QGAEKGKSSRKEKVAAEAEASEEA) form a disordered region. Residues 107–119 (EKGKSSRKEKVAA) show a composition bias toward basic and acidic residues.

Belongs to the bacterial ribosomal protein bS6 family.

Functionally, binds together with bS18 to 16S ribosomal RNA. This is Small ribosomal subunit protein bS6 from Coxiella burnetii (strain CbuG_Q212) (Coxiella burnetii (strain Q212)).